We begin with the raw amino-acid sequence, 261 residues long: 5'-nucleotidase SurE (261 aa).

Positions 8, 9, 43, and 96 each coordinate a divalent metal cation.

It belongs to the SurE nucleotidase family. A divalent metal cation serves as cofactor.

It is found in the cytoplasm. It catalyses the reaction a ribonucleoside 5'-phosphate + H2O = a ribonucleoside + phosphate. Its function is as follows. Nucleotidase that shows phosphatase activity on nucleoside 5'-monophosphates. This chain is 5'-nucleotidase SurE, found in Roseobacter denitrificans (strain ATCC 33942 / OCh 114) (Erythrobacter sp. (strain OCh 114)).